The primary structure comprises 290 residues: Mitochondrial dicarboxylate carrier (290 aa).

3 Solcar repeats span residues 6-90 (TKRL…VKKQ), 101-188 (QKAL…IKQT), and 197-281 (DNLQ…LRLK). 3 helical membrane passes run 12–32 (WYFG…LDLL), 65–84 (GVSA…FGIY), and 103–123 (ALLA…GDLV). K159 carries the N6-acetyllysine modification. The next 3 helical transmembrane spans lie at 163 to 182 (GATM…LSFY), 203 to 223 (FASS…LDVM), and 256 to 276 (GFIP…IFFE).

The protein belongs to the mitochondrial carrier (TC 2.A.29) family.

It is found in the mitochondrion inner membrane. It catalyses the reaction (S)-malate(in) + phosphate(out) = (S)-malate(out) + phosphate(in). It carries out the reaction malonate(out) + (S)-malate(in) = malonate(in) + (S)-malate(out). The catalysed reaction is (S)-malate(in) + succinate(out) = (S)-malate(out) + succinate(in). The enzyme catalyses (S)-malate(in) + sulfate(out) = (S)-malate(out) + sulfate(in). It catalyses the reaction 2 thiosulfate(out) + (S)-malate(in) = 2 thiosulfate(in) + (S)-malate(out). It carries out the reaction malonate(out) + phosphate(in) = malonate(in) + phosphate(out). The catalysed reaction is succinate(out) + phosphate(in) = succinate(in) + phosphate(out). The enzyme catalyses sulfate(out) + phosphate(in) = sulfate(in) + phosphate(out). It catalyses the reaction 2 thiosulfate(out) + phosphate(in) = 2 thiosulfate(in) + phosphate(out). It carries out the reaction malonate(out) + succinate(in) = malonate(in) + succinate(out). Catalyzes the electroneutral exchange or flux of physiologically important metabolites such as dicarboxylates (malonate, malate, succinate), inorganic sulfur-containing anions, and phosphate, across mitochondrial inner membrane. Plays an important role in gluconeogenesis, fatty acid metabolism, urea synthesis, and sulfur metabolism, by supplying the substrates for the different metabolic processes. This is Mitochondrial dicarboxylate carrier from Caenorhabditis elegans.